Consider the following 420-residue polypeptide: UPF0053 protein HI_0107 (420 aa).

A CNNM transmembrane domain is found at 2-190 (DSIPLSTLFI…GEATPNEQHP (189 aa)). A run of 4 helical transmembrane segments spans residues 3–23 (SIPL…SAYF), 65–85 (FILI…TVIG), 92–112 (AGVA…SEIF), and 126–146 (FFSS…VWLM). CBS domains are found at residues 208–268 (MVPR…KNEF) and 273–333 (LIRA…FTTS).

The protein belongs to the UPF0053 family.

The protein localises to the cell membrane. The chain is UPF0053 protein HI_0107 from Haemophilus influenzae (strain ATCC 51907 / DSM 11121 / KW20 / Rd).